The following is a 376-amino-acid chain: Alcohol dehydrogenase 1 (376 aa).

Ser2 bears the N-acetylserine mark. Zn(2+) is bound by residues Cys47, His68, Cys98, Cys101, Cys104, Cys112, and Cys176. Residues Gly201–Gly206, Asp225, and Lys230 contribute to the NAD(+) site. Lys235 is modified (N6-succinyllysine). Residue Val294–Val296 participates in NAD(+) binding. Lys341 bears the N6-succinyllysine mark. Position 371 (Arg371) interacts with NAD(+).

This sequence belongs to the zinc-containing alcohol dehydrogenase family. Class-I subfamily. In terms of assembly, dimer of identical or non-identical chains of three types (A, B, C), which are coded by 3 separate genes at different loci. Requires Zn(2+) as cofactor.

Its subcellular location is the cytoplasm. The catalysed reaction is a primary alcohol + NAD(+) = an aldehyde + NADH + H(+). It catalyses the reaction a secondary alcohol + NAD(+) = a ketone + NADH + H(+). The polypeptide is Alcohol dehydrogenase 1 (Adh1) (Rattus norvegicus (Rat)).